We begin with the raw amino-acid sequence, 536 residues long: Glycine-rich extracellular protein 1 (536 aa).

An N-terminal signal peptide occupies residues 1–22 (MGAWAFPAALFLLCLTSESLQG). 3 disordered regions span residues 111 to 134 (AQNGFGPGFGGGGKPQKPGPTTQN), 306 to 336 (GAGEGMKPQKPGLRGTLKPQKSGHGHENGPW), and 500 to 536 (GDEYAEARSQPGGPDVKRGSNGQLGNGYGGRCPLGKC). The span at 115 to 124 (FGPGFGGGGK) shows a compositional bias: gly residues. Gly residues predominate over residues 521–536 (GQLGNGYGGRCPLGKC).

This Homo sapiens (Human) protein is Glycine-rich extracellular protein 1.